The following is a 116-amino-acid chain: Large ribosomal subunit protein uL24 (116 aa).

Belongs to the universal ribosomal protein uL24 family. In terms of assembly, part of the 50S ribosomal subunit.

In terms of biological role, one of two assembly initiator proteins, it binds directly to the 5'-end of the 23S rRNA, where it nucleates assembly of the 50S subunit. Located at the polypeptide exit tunnel on the outside of the subunit. This is Large ribosomal subunit protein uL24 from Methanosarcina barkeri (strain Fusaro / DSM 804).